The following is a 105-amino-acid chain: Large ribosomal subunit protein bL21 (105 aa).

Belongs to the bacterial ribosomal protein bL21 family. As to quaternary structure, part of the 50S ribosomal subunit. Contacts protein L20.

In terms of biological role, this protein binds to 23S rRNA in the presence of protein L20. The polypeptide is Large ribosomal subunit protein bL21 (Desulfatibacillum aliphaticivorans).